Consider the following 585-residue polypeptide: Proline--tRNA ligase (585 aa).

It belongs to the class-II aminoacyl-tRNA synthetase family. ProS type 1 subfamily. As to quaternary structure, homodimer.

It localises to the cytoplasm. It catalyses the reaction tRNA(Pro) + L-proline + ATP = L-prolyl-tRNA(Pro) + AMP + diphosphate. Catalyzes the attachment of proline to tRNA(Pro) in a two-step reaction: proline is first activated by ATP to form Pro-AMP and then transferred to the acceptor end of tRNA(Pro). As ProRS can inadvertently accommodate and process non-cognate amino acids such as alanine and cysteine, to avoid such errors it has two additional distinct editing activities against alanine. One activity is designated as 'pretransfer' editing and involves the tRNA(Pro)-independent hydrolysis of activated Ala-AMP. The other activity is designated 'posttransfer' editing and involves deacylation of mischarged Ala-tRNA(Pro). The misacylated Cys-tRNA(Pro) is not edited by ProRS. The polypeptide is Proline--tRNA ligase (Corynebacterium diphtheriae (strain ATCC 700971 / NCTC 13129 / Biotype gravis)).